We begin with the raw amino-acid sequence, 148 residues long: Arginine repressor (148 aa).

This sequence belongs to the ArgR family.

It is found in the cytoplasm. The protein operates within amino-acid biosynthesis; L-arginine biosynthesis [regulation]. Regulates arginine biosynthesis genes. This chain is Arginine repressor, found in Chlorobium chlorochromatii (strain CaD3).